The chain runs to 176 residues: Inner membrane-spanning protein YciB (176 aa).

A run of 5 helical transmembrane segments spans residues 24-44 (TATA…AFRH), 49-69 (PMLW…LVLH), 76-96 (WKPT…QLAF), 119-139 (LNVV…FVAY), and 149-169 (FKLF…SLWL).

This sequence belongs to the YciB family.

Its subcellular location is the cell inner membrane. Its function is as follows. Plays a role in cell envelope biogenesis, maintenance of cell envelope integrity and membrane homeostasis. The protein is Inner membrane-spanning protein YciB of Paraburkholderia xenovorans (strain LB400).